The primary structure comprises 179 residues: Alkyl hydroperoxide reductase AhpD (179 aa).

The Proton donor role is filled by Cys-130. An intrachain disulfide couples Cys-130 to Cys-133. The active-site Cysteine sulfenic acid (-SOH) intermediate is the Cys-133.

It belongs to the AhpD family. As to quaternary structure, homotrimer.

It carries out the reaction N(6)-[(R)-dihydrolipoyl]-L-lysyl-[lipoyl-carrier protein] + a hydroperoxide = N(6)-[(R)-lipoyl]-L-lysyl-[lipoyl-carrier protein] + an alcohol + H2O. In terms of biological role, antioxidant protein with alkyl hydroperoxidase activity. Required for the reduction of the AhpC active site cysteine residues and for the regeneration of the AhpC enzyme activity. This Rhodococcus erythropolis (strain PR4 / NBRC 100887) protein is Alkyl hydroperoxide reductase AhpD.